The primary structure comprises 415 residues: Gamma-glutamyl phosphate reductase 1 (415 aa).

It belongs to the gamma-glutamyl phosphate reductase family.

It localises to the cytoplasm. It carries out the reaction L-glutamate 5-semialdehyde + phosphate + NADP(+) = L-glutamyl 5-phosphate + NADPH + H(+). The protein operates within amino-acid biosynthesis; L-proline biosynthesis; L-glutamate 5-semialdehyde from L-glutamate: step 2/2. Its function is as follows. Catalyzes the NADPH-dependent reduction of L-glutamate 5-phosphate into L-glutamate 5-semialdehyde and phosphate. The product spontaneously undergoes cyclization to form 1-pyrroline-5-carboxylate. This is Gamma-glutamyl phosphate reductase 1 from Bacillus licheniformis (strain ATCC 14580 / DSM 13 / JCM 2505 / CCUG 7422 / NBRC 12200 / NCIMB 9375 / NCTC 10341 / NRRL NRS-1264 / Gibson 46).